The primary structure comprises 481 residues: UDP-N-acetylmuramoyl-L-alanyl-D-glutamate--L-lysine ligase (481 aa).

Serine 42 serves as a coordination point for UDP-N-acetyl-alpha-D-muramoyl-L-alanyl-D-glutamate. 118–124 (GTKGKTT) contacts ATP. UDP-N-acetyl-alpha-D-muramoyl-L-alanyl-D-glutamate-binding positions include 160–161 (TT), serine 187, and arginine 195. Position 229 is an N6-carboxylysine (lysine 229). Residues 404-407 (DDPN) carry the L-lysine recognition motif motif.

The protein belongs to the MurCDEF family. MurE subfamily. Post-translationally, carboxylation is probably crucial for Mg(2+) binding and, consequently, for the gamma-phosphate positioning of ATP.

It is found in the cytoplasm. The catalysed reaction is UDP-N-acetyl-alpha-D-muramoyl-L-alanyl-D-glutamate + L-lysine + ATP = UDP-N-acetyl-alpha-D-muramoyl-L-alanyl-gamma-D-glutamyl-L-lysine + ADP + phosphate + H(+). It participates in cell wall biogenesis; peptidoglycan biosynthesis. Functionally, catalyzes the addition of L-lysine to the nucleotide precursor UDP-N-acetylmuramoyl-L-alanyl-D-glutamate (UMAG) in the biosynthesis of bacterial cell-wall peptidoglycan. In Streptococcus sanguinis (strain SK36), this protein is UDP-N-acetylmuramoyl-L-alanyl-D-glutamate--L-lysine ligase.